Consider the following 690-residue polypeptide: Heterogeneous nuclear ribonucleoprotein M (690 aa).

Residues 1–13 (MAAGVEAAAEVAA) show a composition bias toward low complexity. The segment at 1-63 (MAAGVEAAAE…KRGGNRFEPY (63 aa)) is disordered. Position 2 is an N-acetylalanine (alanine 2). Lysine 17 is covalently cross-linked (Glycyl lysine isopeptide (Lys-Gly) (interchain with G-Cter in SUMO2)). The residue at position 29 (serine 29) is a Phosphoserine. Residues lysine 37, lysine 68, and lysine 82 each participate in a glycyl lysine isopeptide (Lys-Gly) (interchain with G-Cter in SUMO2) cross-link. Residues 37–49 (KGEERPTQNEKRK) are compositionally biased toward basic and acidic residues. 2 RRM domains span residues 70–148 (YRAF…EDPD) and 164–241 (STVF…MDER). Serine 85 is modified (phosphoserine). Glycyl lysine isopeptide (Lys-Gly) (interchain with G-Cter in SUMO2) cross-links involve residues lysine 87 and lysine 126. Position 133 is an N6-acetyllysine; alternate (lysine 133). Lysine 133 participates in a covalent cross-link: Glycyl lysine isopeptide (Lys-Gly) (interchain with G-Cter in SUMO2); alternate. Glycyl lysine isopeptide (Lys-Gly) (interchain with G-Cter in SUMO2) cross-links involve residues lysine 142 and lysine 144. Serine 164 is subject to Phosphoserine. Residue lysine 181 forms a Glycyl lysine isopeptide (Lys-Gly) (interchain with G-Cter in SUMO2) linkage. At lysine 237 the chain carries N6-acetyllysine; alternate. Lysine 237 is covalently cross-linked (Glycyl lysine isopeptide (Lys-Gly) (interchain with G-Cter in SUMO2); alternate). Glycyl lysine isopeptide (Lys-Gly) (interchain with G-Cter in SUMO2) cross-links involve residues lysine 245 and lysine 305. A phosphoserine mark is found at serine 325 and serine 337. Residues lysine 341 and lysine 348 each participate in a glycyl lysine isopeptide (Lys-Gly) (interchain with G-Cter in SUMO2) cross-link. Position 357 is a phosphoserine (serine 357). 4 repeat units span residues 360-365 (GIERMG), 367-372 (GIDRIS), 375-380 (GMERMG), and 386-391 (GMDRVG). The 27 X 6 AA repeats of [GEVSTPAN]-[ILMV]-[DE]-[RH]-[MLVI]-[GAV] stretch occupies residues 360-568 (GIERMGPGID…ALGAGIERMG (209 aa)). Position 392 is a phosphoserine (serine 392). A run of 3 repeats spans residues 393–398 (EIERMG), 400–405 (VMDRMG), and 406–411 (SVERMG). Phosphoserine is present on serine 412. Repeat copies occupy residues 413 to 418 (GIERMG), 421 to 426 (GLDHMA), 428 to 433 (SIERMG), and 435 to 440 (TMERIG). Serine 428 bears the Phosphoserine mark. Serine 441 bears the Phosphoserine mark. 16 repeat units span residues 442–447 (GVERMG), 453–458 (GLERMA), 460–465 (PIDRVG), 467–472 (TIERMG), 474–479 (GVERMG), 481–486 (AIERMG), 488–493 (SMDRMV), 500–505 (GLERMG), 507–512 (VMDRMA), 514–519 (GLERMG), 522–527 (NLERMG), 528–532 (LERMG), 535–540 (SLERMG), 541–545 (LERMG), 548–553 (SLERMG), and 563–568 (GIERMG). Position 456 is an omega-N-methylarginine (arginine 456). The residue at position 488 (serine 488) is a Phosphoserine. Serine 535 is modified (phosphoserine). Residue serine 548 is modified to Phosphoserine. Serine 578, serine 593, and serine 597 each carry phosphoserine. Lysine 611 participates in a covalent cross-link: Glycyl lysine isopeptide (Lys-Gly) (interchain with G-Cter in SUMO2). The region spanning 613–689 (CQIFVRNLPF…REIDVRIDRN (77 aa)) is the RRM 3 domain. Position 625 is a phosphothreonine (threonine 625). Lysine 627 is covalently cross-linked (Glycyl lysine isopeptide (Lys-Gly) (interchain with G-Cter in SUMO2)). Lysine 632 carries the N6-acetyllysine modification. Glycyl lysine isopeptide (Lys-Gly) (interchain with G-Cter in SUMO2) cross-links involve residues lysine 645 and lysine 652. Position 658 is an N6-acetyllysine; alternate (lysine 658). Residue lysine 658 forms a Glycyl lysine isopeptide (Lys-Gly) (interchain with G-Cter in SUMO2); alternate linkage. A Glycyl lysine isopeptide (Lys-Gly) (interchain with G-Cter in SUMO1); alternate cross-link involves residue lysine 658. Phosphoserine is present on serine 661. Residue lysine 676 forms a Glycyl lysine isopeptide (Lys-Gly) (interchain with G-Cter in SUMO2) linkage.

In terms of assembly, identified in the spliceosome C complex. Interacts with PPIA/CYPA. Post-translationally, sumoylated. In terms of tissue distribution, expressed in all tissues tested, including liver, heart, lung, skeletal muscle, kidney, stomach, large intestine, small intestine, pancreas, spleen, peritoneal macrophage and thyroid.

The protein resides in the nucleus matrix. Functionally, pre-mRNA binding protein, binds avidly to poly(G) and poly(U) RNA homopolymers. Involved in splicing. Acts as a receptor for carcinoembryonic antigen in Kupffer cells, may initiate a series of signaling events leading to tyrosine phosphorylation of proteins and induction of IL-1 alpha, IL-6, IL-10 and tumor necrosis factor alpha cytokines. This chain is Heterogeneous nuclear ribonucleoprotein M (Hnrnpm), found in Rattus norvegicus (Rat).